Consider the following 284-residue polypeptide: 2,3,4,5-tetrahydropyridine-2,6-dicarboxylate N-succinyltransferase (284 aa).

The substrate site is built by arginine 111 and aspartate 148.

It belongs to the transferase hexapeptide repeat family. As to quaternary structure, homotrimer.

It is found in the cytoplasm. The enzyme catalyses (S)-2,3,4,5-tetrahydrodipicolinate + succinyl-CoA + H2O = (S)-2-succinylamino-6-oxoheptanedioate + CoA. It participates in amino-acid biosynthesis; L-lysine biosynthesis via DAP pathway; LL-2,6-diaminopimelate from (S)-tetrahydrodipicolinate (succinylase route): step 1/3. The sequence is that of 2,3,4,5-tetrahydropyridine-2,6-dicarboxylate N-succinyltransferase from Brucella anthropi (strain ATCC 49188 / DSM 6882 / CCUG 24695 / JCM 21032 / LMG 3331 / NBRC 15819 / NCTC 12168 / Alc 37) (Ochrobactrum anthropi).